The primary structure comprises 548 residues: Biotin-dependent acetyl-/propionyl-coenzyme A carboxylase beta5 subunit (548 aa).

Residues Met-1 to His-23 are disordered. The span at Arg-7–Asp-21 shows a compositional bias: basic and acidic residues. The CoA carboxyltransferase N-terminal domain maps to Thr-25–Gln-281. The CoA carboxyltransferase C-terminal domain occupies Asp-295–Lys-541.

It belongs to the AccD/PCCB family. In terms of assembly, the biotin-dependent acyl-CoA carboxylase complex is composed of AccA3, which contains the biotin carboxylase (BC) and biotin carboxyl carrier protein (BCCP) domains, and AccD5, which contains the carboxyl transferase (CT) domain.

The catalysed reaction is N(6)-carboxybiotinyl-L-lysyl-[protein] + acetyl-CoA = N(6)-biotinyl-L-lysyl-[protein] + malonyl-CoA. It carries out the reaction N(6)-carboxybiotinyl-L-lysyl-[protein] + propanoyl-CoA = methylmalonyl-CoA + N(6)-biotinyl-L-lysyl-[protein]. The protein operates within lipid metabolism; mycolic acid biosynthesis. Component of a biotin-dependent acyl-CoA carboxylase complex. This subunit transfers the CO2 from carboxybiotin to the CoA ester substrate. When associated with the alpha3 subunit AccA3, is involved in the carboxylation of acetyl-CoA and propionyl-CoA. The protein is Biotin-dependent acetyl-/propionyl-coenzyme A carboxylase beta5 subunit (accD5) of Mycobacterium tuberculosis (strain CDC 1551 / Oshkosh).